The sequence spans 181 residues: Ninjurin-B (181 aa).

Residues 1-10 are compositionally biased toward basic and acidic residues; sequence MDSGEVKISL. Residues 1-72 are disordered; it reads MDSGEVKISL…SNKKCSSDLS (72 aa). Residues 1-115 are Extracellular-facing; that stretch reads MDSGEVKISL…YNDKASTYIY (115 aa). Positions 12 to 26 are enriched in polar residues; it reads DSPSSGESFASTTSG. Basic and acidic residues predominate over residues 33 to 49; the sequence is RDLDIQVHESHIKDDQF. A helix alpha1 region spans residues 80-91; the sequence is NKNVAEGLMDIA. Positions 94–110 are helix alpha2; sequence SANANQLRFLITYNDKA. A helical membrane pass occupies residues 116-136; the sequence is SMIMVILSLVLQLLVGIMLIF. Topologically, residues 137-153 are cytoplasmic; it reads KRRLKRFRNRSYERTND. A helical membrane pass occupies residues 154–174; the sequence is LLVMGVFMITVINILLAAFTT. The Extracellular segment spans residues 175–181; the sequence is TDGGGSH.

Belongs to the ninjurin family.

The protein localises to the membrane. In terms of biological role, effector of non-apoptotic necrotic cell death that mediates plasma membrane rupture (cytolysis): oligomerizes in response to death stimuli and promotes plasma membrane rupture by introducing hydrophilic faces of 2 alpha helices into the hydrophobic membrane, leading to release intracellular molecules that propagate the inflammatory response. Also acts as a homophilic transmembrane adhesion molecule that promotes cell adhesion by mediating homophilic interactions via its extracellular region. This chain is Ninjurin-B, found in Drosophila melanogaster (Fruit fly).